Consider the following 343-residue polypeptide: Polyprenal reductase 2 (343 aa).

The next 6 membrane-spanning stretches (helical) occupy residues 12 to 32 (GAWITVWIVSILPLVIASIPT), 66 to 86 (FAHFYVIGVVWTTLLLAATWM), 164 to 184 (MHILGYFAGLFFYVTAPLSLC), 223 to 243 (PLMKLGSLQWIGGAIFLWGWI), 266 to 286 (IIPYGDWFGMVSSPHFLAEIV), and 291 to 311 (LLIASGGTDITIWLLFGFVAA).

Belongs to the steroid 5-alpha reductase family. Polyprenal reductase subfamily. Expressed in roots, leaves, stems and flowers.

The protein localises to the endoplasmic reticulum membrane. The catalysed reaction is a di-trans,poly-cis-dolichal + NADP(+) = a di-trans,poly-cis-polyprenal + NADPH + H(+). The protein operates within protein modification; protein glycosylation. Plays a key role in early steps of protein N-linked glycosylation by being involved in the conversion of polyprenol into dolichol. Acts as a polyprenal reductase that mediates the reduction of polyprenal into dolichal in a NADP-dependent mechanism. Dolichols are required for the synthesis of dolichol-linked monosaccharides and the oligosaccharide precursor used for N-glycosylation. Involved in the regulation of plant growth and reproductive processes. In Arabidopsis thaliana (Mouse-ear cress), this protein is Polyprenal reductase 2.